Here is a 115-residue protein sequence, read N- to C-terminus: Transmembrane protein 14C (115 aa).

The next 4 helical transmembrane spans lie at 8-28 (LVPL…GGII), 33-53 (AGSV…GLGA), 63-83 (VWVF…RFYN), and 88-108 (MPAG…VAKI).

Belongs to the TMEM14 family.

The protein localises to the mitochondrion membrane. Functionally, required for normal heme biosynthesis. The sequence is that of Transmembrane protein 14C (Tmem14c) from Rattus norvegicus (Rat).